Here is a 558-residue protein sequence, read N- to C-terminus: uncharacterized protein (558 aa).

A run of 6 helical transmembrane segments spans residues 63–83 (LTGIVVALLVVTFAFPVPSIY), 90–110 (VTFGVAPAYATLALAIGTYWI), 143–163 (VAAVHLILWDIGGALLATLYG), 168–188 (VFVTIILFSVTICGVLVATNC), 226–246 (SLGSGVPVTGIATTALYVLLV), and 258–278 (VLILSITTLIFGFLVMWILAW). Residues 279-330 (LTAAPVRVVRAALKRVEQGDLRGDLVVFDGTELGELQRGFNAMVNGLRERER) enclose the HAMP domain. A Guanylate cyclase domain is found at 362 to 486 (AVVFVDIVGS…KPVNQAARLC (125 aa)). The tract at residues 529–558 (TQLASPHRRPPGSIHLTAEHAEEIRTDRLG) is disordered. Positions 545 to 558 (TAEHAEEIRTDRLG) are enriched in basic and acidic residues.

The protein belongs to the adenylyl cyclase class-3 family.

The protein localises to the cell membrane. This is an uncharacterized protein from Mycobacterium tuberculosis (strain CDC 1551 / Oshkosh).